A 320-amino-acid polypeptide reads, in one-letter code: Aspartate carbamoyltransferase catalytic subunit (320 aa).

Residues R57 and T58 each coordinate carbamoyl phosphate. An L-aspartate-binding site is contributed by K85. Positions 107, 141, and 144 each coordinate carbamoyl phosphate. L-aspartate-binding residues include R174 and R228. Carbamoyl phosphate-binding residues include G269 and P270.

This sequence belongs to the aspartate/ornithine carbamoyltransferase superfamily. ATCase family. In terms of assembly, heterododecamer (2C3:3R2) of six catalytic PyrB chains organized as two trimers (C3), and six regulatory PyrI chains organized as three dimers (R2).

It carries out the reaction carbamoyl phosphate + L-aspartate = N-carbamoyl-L-aspartate + phosphate + H(+). The protein operates within pyrimidine metabolism; UMP biosynthesis via de novo pathway; (S)-dihydroorotate from bicarbonate: step 2/3. Its function is as follows. Catalyzes the condensation of carbamoyl phosphate and aspartate to form carbamoyl aspartate and inorganic phosphate, the committed step in the de novo pyrimidine nucleotide biosynthesis pathway. The sequence is that of Aspartate carbamoyltransferase catalytic subunit from Mycobacterium marinum (strain ATCC BAA-535 / M).